The following is an 85-amino-acid chain: Toxin CsE8 (85 aa).

The N-terminal stretch at 1–19 (MNSLLMITACLVLFGTVWS) is a signal peptide. Residues 20–83 (EKGYLVHEDT…TWPLIGKLCG (64 aa)) enclose the LCN-type CS-alpha/beta domain. 4 disulfides stabilise this stretch: Cys31–Cys82, Cys35–Cys58, Cys44–Cys63, and Cys48–Cys65. The residue at position 82 (Cys82) is a Cysteine amide.

This sequence belongs to the long (4 C-C) scorpion toxin superfamily. Sodium channel inhibitor family. Beta subfamily. Expressed by the venom gland.

The protein localises to the secreted. Its function is as follows. Beta toxins bind voltage-independently at site-4 of sodium channels (Nav) and shift the voltage of activation toward more negative potentials thereby affecting sodium channel activation and promoting spontaneous and repetitive firing. This Centruroides sculpturatus (Arizona bark scorpion) protein is Toxin CsE8.